A 165-amino-acid chain; its full sequence is NADPH-dependent 7-cyano-7-deazaguanine reductase (165 aa).

The Thioimide intermediate role is filled by C56. Residue D63 is the Proton donor of the active site. Residues 78–80 (VES) and 97–98 (HE) contribute to the substrate site.

The protein belongs to the GTP cyclohydrolase I family. QueF type 1 subfamily.

Its subcellular location is the cytoplasm. The catalysed reaction is 7-aminomethyl-7-carbaguanine + 2 NADP(+) = 7-cyano-7-deazaguanine + 2 NADPH + 3 H(+). It participates in tRNA modification; tRNA-queuosine biosynthesis. Functionally, catalyzes the NADPH-dependent reduction of 7-cyano-7-deazaguanine (preQ0) to 7-aminomethyl-7-deazaguanine (preQ1). The polypeptide is NADPH-dependent 7-cyano-7-deazaguanine reductase (Bacillus licheniformis (strain ATCC 14580 / DSM 13 / JCM 2505 / CCUG 7422 / NBRC 12200 / NCIMB 9375 / NCTC 10341 / NRRL NRS-1264 / Gibson 46)).